Here is a 154-residue protein sequence, read N- to C-terminus: Myoglobin (154 aa).

A Globin domain is found at 2 to 148 (GLSDGEWQLV…FRNDIAAKYK (147 aa)). Phosphoserine is present on S4. A nitrite-binding site is contributed by H65. H65 contacts O2. T68 is modified (phosphothreonine). H94 contacts heme b.

It belongs to the globin family. In terms of assembly, monomeric.

The protein localises to the cytoplasm. It localises to the sarcoplasm. The enzyme catalyses Fe(III)-heme b-[protein] + nitric oxide + H2O = Fe(II)-heme b-[protein] + nitrite + 2 H(+). It carries out the reaction H2O2 + AH2 = A + 2 H2O. Its function is as follows. Monomeric heme protein which primary function is to store oxygen and facilitate its diffusion within muscle tissues. Reversibly binds oxygen through a pentacoordinated heme iron and enables its timely and efficient release as needed during periods of heightened demand. Depending on the oxidative conditions of tissues and cells, and in addition to its ability to bind oxygen, it also has a nitrite reductase activity whereby it regulates the production of bioactive nitric oxide. Under stress conditions, like hypoxia and anoxia, it also protects cells against reactive oxygen species thanks to its pseudoperoxidase activity. The sequence is that of Myoglobin (MB) from Ctenodactylus gundi (Northern gundi).